The sequence spans 84 residues: Small ribosomal subunit protein uS17 (84 aa).

Belongs to the universal ribosomal protein uS17 family. As to quaternary structure, part of the 30S ribosomal subunit.

In terms of biological role, one of the primary rRNA binding proteins, it binds specifically to the 5'-end of 16S ribosomal RNA. This is Small ribosomal subunit protein uS17 from Clostridioides difficile (strain 630) (Peptoclostridium difficile).